The following is a 250-amino-acid chain: Probable transcriptional regulatory protein Emin_1151 (250 aa).

Belongs to the TACO1 family.

Its subcellular location is the cytoplasm. The polypeptide is Probable transcriptional regulatory protein Emin_1151 (Elusimicrobium minutum (strain Pei191)).